The following is a 158-amino-acid chain: C-type lectin galactose-binding isoform (158 aa).

The signal sequence occupies residues 1 to 23 (MGRFLLVTLSLLVMAFFLNGANS). Intrachain disulfides connect Cys-26–Cys-37, Cys-54–Cys-154, and Cys-129–Cys-146. The C-type lectin domain maps to 33–155 (RNGFCYKVFN…CTALRPFLCQ (123 aa)). Ca(2+)-binding residues include Gln-119, Asp-121, and Glu-127. The Galactose-binding signature appears at 119–121 (QPD). Asn-134 is a glycosylation site (N-linked (GlcNAc...) asparagine). Residues Asn-142 and Asp-143 each contribute to the Ca(2+) site.

It belongs to the true venom lectin family. Dimer. Probably disulfide-linked homodimer. As to expression, expressed by the venom gland.

It is found in the secreted. Functionally, galactose-binding lectin that binds to and agglutinates erythrocytes in a calcium-dependent manner. The protein is C-type lectin galactose-binding isoform of Pseudechis australis (Mulga snake).